Consider the following 345-residue polypeptide: Protein-glutamate methylesterase/protein-glutamine glutaminase (345 aa).

The Response regulatory domain maps to 5–123; the sequence is KVIVVDDSVL…ELSKMKDDLI (119 aa). A 4-aspartylphosphate modification is found at Asp56. The region spanning 153-343 is the CheB-type methylesterase domain; that stretch reads SSDSIEAVVI…DEIIKIVRGL (191 aa). Active-site residues include Ser165, His192, and Asp285.

It belongs to the CheB family. Phosphorylated by CheA. Phosphorylation of the N-terminal regulatory domain activates the methylesterase activity.

It localises to the cytoplasm. It carries out the reaction [protein]-L-glutamate 5-O-methyl ester + H2O = L-glutamyl-[protein] + methanol + H(+). The enzyme catalyses L-glutaminyl-[protein] + H2O = L-glutamyl-[protein] + NH4(+). Its function is as follows. Involved in chemotaxis. Part of a chemotaxis signal transduction system that modulates chemotaxis in response to various stimuli. Catalyzes the demethylation of specific methylglutamate residues introduced into the chemoreceptors (methyl-accepting chemotaxis proteins or MCP) by CheR. Also mediates the irreversible deamidation of specific glutamine residues to glutamic acid. This chain is Protein-glutamate methylesterase/protein-glutamine glutaminase, found in Clostridium acetobutylicum (strain ATCC 824 / DSM 792 / JCM 1419 / IAM 19013 / LMG 5710 / NBRC 13948 / NRRL B-527 / VKM B-1787 / 2291 / W).